The sequence spans 234 residues: MRRADGQPVTVLVVDDEPVLAEMVSMALRYEGWNITTAGDGSSAIAAARRQRPDVVVLDVMLPDMSGLDVLHKLRSENPGLPVLLLTAKDAVEDRIAGLTAGGDDYVTKPFSIEEVVLRLRALLRRTGVTTVDSGAQLVVGDLVLDEDSHEVMRAGEPVSLTSTEFELLRFMMHNSKRVLSKAQILDRVWSYDFGGRSNIVELYISYLRKKIDNGREPMIHTLRGAGYVLKPAR.

A Response regulatory domain is found at 10–124 (TVLVVDDEPV…EVVLRLRALL (115 aa)). A 4-aspartylphosphate modification is found at D59. A DNA-binding region (ompR/PhoB-type) is located at residues 135–232 (GAQLVVGDLV…LRGAGYVLKP (98 aa)).

Phosphorylated by TcrY.

Its subcellular location is the cytoplasm. Its function is as follows. Member of the two-component regulatory system TcrY/TcrX. The sequence is that of Probable transcriptional regulatory protein TcrX (tcrX) from Mycobacterium tuberculosis (strain ATCC 25618 / H37Rv).